The primary structure comprises 317 residues: Metaxin-1 (317 aa).

Glycyl lysine isopeptide (Lys-Gly) (interchain with G-Cter in ubiquitin) cross-links involve residues Lys-38, Lys-41, Lys-78, and Lys-168. A helical membrane pass occupies residues 272–292; sequence ILSVLAGLAAMVGYALLSGIV.

This sequence belongs to the metaxin family. As to quaternary structure, interacts with MTX2/metaxin-2. Associates with the mitochondrial contact site and cristae organizing system (MICOS) complex, composed of at least MICOS10/MIC10, CHCHD3/MIC19, CHCHD6/MIC25, APOOL/MIC27, IMMT/MIC60, APOO/MIC23/MIC26 and QIL1/MIC13. This complex was also known under the names MINOS or MitOS complex. The MICOS complex associates with mitochondrial outer membrane proteins SAMM50, MTX1 and MTX2 (together described as components of the mitochondrial outer membrane sorting assembly machinery (SAM) complex) and DNAJC11, mitochondrial inner membrane protein TMEM11 and with HSPA9. The MICOS and SAM complexes together with DNAJC11 are part of a large protein complex spanning both membranes termed the mitochondrial intermembrane space bridging (MIB) complex. Interacts with ARMC1. Post-translationally, ubiquitinated by PRKN during mitophagy, leading to its degradation and enhancement of mitophagy. Deubiquitinated by USP30. In terms of tissue distribution, ubiquitous. Higher levels are seen in the kidney as compared to other tissues.

It is found in the mitochondrion outer membrane. Its function is as follows. Involved in transport of proteins into the mitochondrion. Essential for embryonic development. This chain is Metaxin-1 (Mtx1), found in Mus musculus (Mouse).